Here is a 1819-residue protein sequence, read N- to C-terminus: Non-reducing polyketide synthase nscA (1819 aa).

Residues 25-277 (RRLDQHSKDR…PLPVYDGLCH (253 aa)) are N-terminal acylcarrier protein transacylase domain (SAT). A Ketosynthase family 3 (KS3) domain is found at 413 to 846 (SSKLAIVGMA…GGNTTLLLED (434 aa)). Active-site for beta-ketoacyl synthase activity residues include cysteine 586, histidine 721, and histidine 764. The segment at 952–1249 (FTSQGAYYHG…MIPSAPAMSS (298 aa)) is malonyl-CoA:ACP transacylase (MAT) domain. The segment at 1339 to 1658 (TSLVHQITAE…RLLMDRFFSP (320 aa)) is product template (PT) domain. The tract at residues 1343-1479 (HQITAETVEA…AMIRFEDPMA (137 aa)) is N-terminal hotdog fold. The PKS/mFAS DH domain occupies 1343–1653 (HQITAETVEA…IRRVPRLLMD (311 aa)). Histidine 1375 acts as the Proton acceptor; for dehydratase activity in catalysis. The tract at residues 1507–1653 (ASRLSKPLAY…IRRVPRLLMD (147 aa)) is C-terminal hotdog fold. Aspartate 1564 acts as the Proton donor; for dehydratase activity in catalysis. The disordered stretch occupies residues 1703-1742 (SSTMASKAPEPAPLLATSSESSTPKESPIVTPAESEREDP). Residues 1719 to 1730 (TSSESSTPKESP) show a composition bias toward low complexity. The region spanning 1742–1819 (PVDNNMISQC…EMTAWIEEYC (78 aa)) is the Carrier domain. O-(pantetheine 4'-phosphoryl)serine is present on serine 1779.

Requires pantetheine 4'-phosphate as cofactor.

It functions in the pathway secondary metabolite biosynthesis. Functionally, non-reducing polyketide synthase; part of the gene cluster that mediates the biosynthesis of neosartoricin B, a prenylated anthracenone that probably exhibits T-cell antiproliferative activity, suggestive of a physiological role as an immunosuppressive agent. The non-reducing polyketide synthase nscA probably synthesizes and cyclizes the decaketide backbone. The hydrolase nscB then mediates the product release through hydrolysis followed by spontaneous decarboxylation. The prenyltransferase nscD catalyzes the addition of the dimethylallyl group to the aromatic C5. The FAD-dependent monooxygenase nscC is then responsible for the stereospecific hydroxylation at C2. Neosartoricin B can be converted into two additional compounds neosartoricins C and D. Neosartoricin C is a spirocyclic compound that is cyclized through the attack of C3 hydroxyl on C14, followed by dehydration. On the other hand, neosartoricin D is a further cyclized compound in which attack of C2 on C14 in neosartoricin C results in the formation of the acetal-containing dioxabicyclo-octanone ring. Both of these compounds are novel and possibly represent related metabolites of the gene cluster. This is Non-reducing polyketide synthase nscA from Trichophyton verrucosum (strain HKI 0517).